The following is a 52-amino-acid chain: NADH dehydrogenase [ubiquinone] 1 alpha subcomplex subunit 4 homolog (52 aa).

Residues 14 to 30 (LYPLGAAVATAVGFATY) form a helical membrane-spanning segment.

Belongs to the complex I NDUFA4 subunit family.

The protein localises to the mitochondrion inner membrane. In terms of biological role, accessory subunit of the mitochondrial membrane respiratory chain NADH dehydrogenase (Complex I), that is believed to be not involved in catalysis. Complex I functions in the transfer of electrons from NADH to the respiratory chain. The immediate electron acceptor for the enzyme is believed to be ubiquinone. The sequence is that of NADH dehydrogenase [ubiquinone] 1 alpha subcomplex subunit 4 homolog from Schizosaccharomyces pombe (strain 972 / ATCC 24843) (Fission yeast).